The following is a 121-amino-acid chain: Basic phospholipase A2 VRV-PL-VIIIa (121 aa).

7 cysteine pairs are disulfide-bonded: cysteine 26–cysteine 115, cysteine 28–cysteine 44, cysteine 43–cysteine 95, cysteine 49–cysteine 121, cysteine 50–cysteine 88, cysteine 57–cysteine 81, and cysteine 75–cysteine 86. The Ca(2+) site is built by tyrosine 27, glycine 29, and glycine 31. Residue histidine 47 is part of the active site. Aspartate 48 lines the Ca(2+) pocket. The active site involves aspartate 89.

The protein belongs to the phospholipase A2 family. Group II subfamily. D49 sub-subfamily. In terms of assembly, monomer. The cofactor is Ca(2+). As to expression, expressed by the venom gland.

It localises to the secreted. It carries out the reaction a 1,2-diacyl-sn-glycero-3-phosphocholine + H2O = a 1-acyl-sn-glycero-3-phosphocholine + a fatty acid + H(+). Its activity is regulated as follows. Oxyphenbutazone (OPB), anisic acid and atropine inhibit the enzymatic activity by binding at the substrate-binding site. P-coumaric acid, resveratrol, spermidine, corticosterone and gramine derivative inhibit the enzymatic activity by binding at the substrate-binding site. Snake venom phospholipase A2 (PLA2) that shows weak neurotoxicity and medium anticoagulant effects by binding to factor Xa (F10) and inhibiting the prothrombinase activity (IC(50) is 130 nM). It also damages vital organs such as lung, liver and kidney, displays edema-inducing activities when injected into the foot pads of mice and induces necrosis of muscle cells when injected into the thigh muscle. Has a low enzymatic activity. PLA2 catalyzes the calcium-dependent hydrolysis of the 2-acyl groups in 3-sn-phosphoglycerides. The chain is Basic phospholipase A2 VRV-PL-VIIIa from Daboia russelii (Russel's viper).